Reading from the N-terminus, the 468-residue chain is MKEYQTITEISGPLVFAEVDEPIGYDEIVEIETPQGETKRGQVLESSEGLVAIQVFEGTSGIDRNASVRFLGETLKMPVTEDLLGRVLDGSGQPIDGGPEIVPDERRDIVGAAINPYSREYPEEFIQTGVSAIDGMNTLVRGQKLPIFSASGLPHNDLALQIARQATVPEDEESGEESEFAVVFGAMGITQEEANEFMEDFERTGALERSVVFTNLADDPAVERTVTPRLALTTAEYLAFDKDYHVLVILTDMTNYCEALREIGAAREEVPGRRGYPGYMYTDLAQLYERAGRIQGRDGSVTQIPILTMPGDDDTHPIPDLTGYITEGQIYIDRDLNSQGIRPPINPLPSLSRLMDDGIGEGLTREDHADVSDQMYAAYAEGEDLRDLVNIVGREALSERDNKYLDFAERFEAEFVNQGFDTDRSIEDTLDIGWDLLSTLPKSELNRIDEELIEDYYEDDAESVEAEA.

Belongs to the ATPase alpha/beta chains family. As to quaternary structure, has multiple subunits with at least A(3), B(3), C, D, E, F, H, I and proteolipid K(x).

The protein localises to the cell membrane. Its function is as follows. Component of the A-type ATP synthase that produces ATP from ADP in the presence of a proton gradient across the membrane. The B chain is a regulatory subunit. The sequence is that of A-type ATP synthase subunit B from Haloferax volcanii (strain ATCC 29605 / DSM 3757 / JCM 8879 / NBRC 14742 / NCIMB 2012 / VKM B-1768 / DS2) (Halobacterium volcanii).